The following is a 165-amino-acid chain: Protein-export protein SecB (165 aa).

This sequence belongs to the SecB family. Homotetramer, a dimer of dimers. One homotetramer interacts with 1 SecA dimer.

The protein resides in the cytoplasm. Its function is as follows. One of the proteins required for the normal export of preproteins out of the cell cytoplasm. It is a molecular chaperone that binds to a subset of precursor proteins, maintaining them in a translocation-competent state. It also specifically binds to its receptor SecA. The chain is Protein-export protein SecB from Colwellia psychrerythraea (strain 34H / ATCC BAA-681) (Vibrio psychroerythus).